The primary structure comprises 819 residues: Metabotropic glutamate receptor-like protein O (819 aa).

A signal peptide spans 1–19; sequence MKKVFFLILILNCVVGALS. Residues 20-394 lie on the Extracellular side of the membrane; it reads NKNICKISLL…FVDSYSNSIK (375 aa). N-linked (GlcNAc...) asparagine glycans are attached at residues Asn99, Asn185, Asn277, Asn295, Asn330, and Asn370. The helical transmembrane segment at 395–415 threads the bilayer; it reads ISILSVSIFCIFICVLGMIFI. At 416–428 the chain is on the cytoplasmic side; the sequence is TVLRNARILKSSS. Residues 429 to 449 form a helical membrane-spanning segment; sequence PSFLLLILFGCIVIFTGCILF. Residues 450–457 lie on the Extracellular side of the membrane; that stretch reads SQPATDKT. Residues 458–478 form a helical membrane-spanning segment; the sequence is CQGRVWLLSIGYTIFLGSLLI. Residues 479–503 lie on the Cytoplasmic side of the membrane; the sequence is KNWRVWLLFDNKKLRKRSITNWKLY. A helical membrane pass occupies residues 504–524; sequence PWVAGILVVDVLILALWQGLG. Over 525–550 the chain is Extracellular; that stretch reads DIKSESRIIGTSFYQYTNVCTNNDQG. The chain crosses the membrane as a helical span at residues 551–571; it reads SIALYILLAFHGLKLLGTCFI. Over 572 to 587 the chain is Cytoplasmic; that stretch reads SFKIKLVDIEEFNESK. The helical transmembrane segment at 588–608 threads the bilayer; it reads PITTSVFIILFCIFTIILLIA. Over 609–624 the chain is Extracellular; sequence PSSSSSSASSPQPIAS. The chain crosses the membrane as a helical span at residues 625–645; the sequence is LETIICICSVTTTAISIGLLF. Topologically, residues 646–819 are cytoplasmic; sequence GDKIYFITTQ…NNENEIISDT (174 aa). The interval 674-819 is disordered; that stretch reads KDCDDDDDDS…NNENEIISDT (146 aa). Basic residues predominate over residues 695 to 712; the sequence is NKNKNKNRNQSEKKKRPN. Residues 726–739 show a composition bias toward polar residues; that stretch reads ESVVFNPPSNNDLT. Residues 748-768 show a composition bias toward basic and acidic residues; that stretch reads GIKEGHGHDSENNDEYEHHED. Positions 769-798 are enriched in acidic residues; sequence EDHEYEGEGEDEDHEDEYEVENDIEQEQEQ. The span at 799-808 shows a compositional bias: low complexity; that stretch reads ESSNISISTK.

It in the N-terminal section; belongs to the BMP lipoprotein family. The protein in the C-terminal section; belongs to the G-protein coupled receptor 3 family. GABA-B receptor subfamily.

The protein localises to the membrane. This is Metabotropic glutamate receptor-like protein O (grlO) from Dictyostelium discoideum (Social amoeba).